We begin with the raw amino-acid sequence, 142 residues long: Coactosin-like protein (142 aa).

An N-acetylalanine modification is found at A2. The ADF-H domain maps to 2 to 130 (ATKIDKEACR…EEDFIKNELK (129 aa)). A flexible and important for F-actin binding region spans residues 66-75 (TGDAMSKRSK). Residues K102 and K126 each carry the N6-acetyllysine modification.

It belongs to the actin-binding proteins ADF family. Coactosin subfamily. As to quaternary structure, interacts with 5-lipoxygenase (ALOX5/5LO) in a calcium-independent manner. Binds to F-actin with a stoichiometry of 1:2.

It is found in the cytoplasm. The protein resides in the cytoskeleton. The protein localises to the nucleus. In terms of biological role, binds to F-actin in a calcium-independent manner. Has no direct effect on actin depolymerization. Acts as a chaperone for ALOX5 (5LO), influencing both its stability and activity in leukotrienes synthesis. In Bos taurus (Bovine), this protein is Coactosin-like protein (COTL1).